Reading from the N-terminus, the 150-residue chain is Large ribosomal subunit protein uL11 (150 aa).

Belongs to the universal ribosomal protein uL11 family. Part of the ribosomal stalk of the 50S ribosomal subunit. Interacts with L10 and the large rRNA to form the base of the stalk. L10 forms an elongated spine to which L12 dimers bind in a sequential fashion forming a multimeric L10(L12)X complex. Post-translationally, one or more lysine residues are methylated.

Forms part of the ribosomal stalk which helps the ribosome interact with GTP-bound translation factors. This Cereibacter sphaeroides (strain KD131 / KCTC 12085) (Rhodobacter sphaeroides) protein is Large ribosomal subunit protein uL11.